The chain runs to 430 residues: Rho GTPase-activating protein 2 (430 aa).

Residues 1–36 (MTGLVMMTKGGGCGGGGKGGRRKSTAEEEEEEEQNQ) form a disordered region. Gly residues predominate over residues 9-18 (KGGGCGGGGK). Residues 80-93 (IGWPTNVRHITHVT) form the CRIB domain. Residues 125–310 (VSAESMQCSY…TLAEREENAT (186 aa)) form the Rho-GAP domain. The disordered stretch occupies residues 307–372 (ENATGSEGYS…HLSRHSTHED (66 aa)). The span at 316-326 (SPSHSSNSQTD) shows a compositional bias: low complexity. A compositionally biased stretch (acidic residues) spans 347 to 356 (ECGEEEEVEE). Positions 357 to 371 (VEQHQEHLSRHSTHE) are enriched in basic and acidic residues.

As to quaternary structure, homodimerizes via its Rho-GAP domain and forms a tetrameric complex (2:2) with ARAC1/ROP3, ARAC2/ROP7, ARAC4/ROP2, ARAC5/ROP4, ARAC7/ROP9 or ARAC11/ROP1.

In terms of biological role, acts as a GTPase activator for the Rac-type GTPase by converting it to an inactive GDP-bound state. The protein is Rho GTPase-activating protein 2 (ROPGAP2) of Arabidopsis thaliana (Mouse-ear cress).